The sequence spans 190 residues: Remorin (190 aa).

A compositionally biased stretch (basic and acidic residues) spans 1 to 12 (MAEEQKTSKVDV). 2 disordered regions span residues 1–45 (MAEE…VESK) and 50–69 (VEKP…SADR). The residue at position 14 (S14) is a Phosphoserine. T58 bears the Phosphothreonine mark. Residues 92-147 (EKSKAENRAQKKISDVHAWENSKKAAVEAQLRKIEEKLEKKKAQYGEKMKNKVAAI) adopt a coiled-coil conformation.

It belongs to the remorin family. In terms of assembly, may polymerize to form filamentous structures. As to expression, expressed in roots, leaves, stems, flowers and siliques, with a maximal expression in apical regions.

Its function is as follows. Exhibits a non sequence-specific DNA-binding activity. This chain is Remorin (DBP), found in Arabidopsis thaliana (Mouse-ear cress).